The sequence spans 234 residues: Probable septum site-determining protein MinC (234 aa).

The protein belongs to the MinC family. Interacts with MinD and FtsZ.

Its function is as follows. Cell division inhibitor that blocks the formation of polar Z ring septums. Rapidly oscillates between the poles of the cell to destabilize FtsZ filaments that have formed before they mature into polar Z rings. Prevents FtsZ polymerization. The sequence is that of Probable septum site-determining protein MinC from Buchnera aphidicola subsp. Baizongia pistaciae (strain Bp).